The following is a 361-amino-acid chain: Probable cysteine protease RD19B (361 aa).

The N-terminal stretch at 1–24 (MDYHLRVLFSVSLIFVFVSVSVCG) is a signal peptide. A propeptide spans 25–131 (DEDVLIRQVV…NQAPILPTQN (107 aa)) (activation peptide). 2 disulfide bridges follow: C153–C203 and C187–C237. C156 is a catalytic residue. A glycan (N-linked (GlcNAc...) asparagine) is linked at N250. Residues C293 and C347 are joined by a disulfide bond. Residues H299 and N326 contribute to the active site.

This sequence belongs to the peptidase C1 family.

It localises to the lytic vacuole. Probable thiol protease. The chain is Probable cysteine protease RD19B from Arabidopsis thaliana (Mouse-ear cress).